Consider the following 98-residue polypeptide: Small ribosomal subunit protein uS17 (98 aa).

This sequence belongs to the universal ribosomal protein uS17 family. In terms of assembly, part of the 30S ribosomal subunit.

Its function is as follows. One of the primary rRNA binding proteins, it binds specifically to the 5'-end of 16S ribosomal RNA. This Carboxydothermus hydrogenoformans (strain ATCC BAA-161 / DSM 6008 / Z-2901) protein is Small ribosomal subunit protein uS17.